The following is a 510-amino-acid chain: Secreted RxLR effector protein 108 (510 aa).

The N-terminal stretch at 1-20 (MRGAYYVLTALFVVTSSDIA) is a signal peptide. The N-linked (GlcNAc...) asparagine glycan is linked to N47. Residues 48-65 (RSLRGSRDGRNDLANEER) carry the RxLR-dEER motif. Disordered stretches follow at residues 111–139 (RAAKAVEEKSRPAKAAKKTPRAAKAAKKT) and 386–442 (KRSR…DDPK). Positions 122–137 (PAKAAKKTPRAAKAAK) are enriched in basic residues. Residues 393–405 (DGNTDTASLPSKQ) show a composition bias toward polar residues. Residues 429 to 442 (VPTKEIKSSFDDPK) are compositionally biased toward basic and acidic residues.

This sequence belongs to the RxLR effector family.

Its subcellular location is the secreted. The protein resides in the host nucleus. Functionally, secreted effector that completely suppresses the host cell death induced by cell death-inducing proteins. The chain is Secreted RxLR effector protein 108 from Plasmopara viticola (Downy mildew of grapevine).